The primary structure comprises 59 residues: UPF0391 membrane protein lpp2589 (59 aa).

2 helical membrane-spanning segments follow: residues 5–25 and 30–50; these read ALIFFIIAIIAAAFGFGGIAV and IAKILFFLFLVMFVIFLIMGL.

This sequence belongs to the UPF0391 family.

The protein localises to the cell membrane. The protein is UPF0391 membrane protein lpp2589 of Legionella pneumophila (strain Paris).